The chain runs to 133 residues: ATP synthase epsilon chain, chloroplastic (133 aa).

This sequence belongs to the ATPase epsilon chain family. In terms of assembly, F-type ATPases have 2 components, CF(1) - the catalytic core - and CF(0) - the membrane proton channel. CF(1) has five subunits: alpha(3), beta(3), gamma(1), delta(1), epsilon(1). CF(0) has three main subunits: a, b and c.

The protein resides in the plastid. Its subcellular location is the chloroplast thylakoid membrane. Its function is as follows. Produces ATP from ADP in the presence of a proton gradient across the membrane. This is ATP synthase epsilon chain, chloroplastic from Cyanidium caldarium (Red alga).